The chain runs to 344 residues: Heat-inducible transcription repressor HrcA (344 aa).

This sequence belongs to the HrcA family.

Functionally, negative regulator of class I heat shock genes (grpE-dnaK-dnaJ and groELS operons). Prevents heat-shock induction of these operons. The chain is Heat-inducible transcription repressor HrcA from Streptococcus pneumoniae serotype 19F (strain G54).